The sequence spans 154 residues: Cyanate hydratase (154 aa).

Active-site residues include arginine 100, glutamate 103, and serine 126.

The protein belongs to the cyanase family.

The enzyme catalyses cyanate + hydrogencarbonate + 3 H(+) = NH4(+) + 2 CO2. In terms of biological role, catalyzes the reaction of cyanate with bicarbonate to produce ammonia and carbon dioxide. This is Cyanate hydratase from Aspergillus fumigatus (strain ATCC MYA-4609 / CBS 101355 / FGSC A1100 / Af293) (Neosartorya fumigata).